The sequence spans 438 residues: Phosphoribosylamine--glycine ligase (438 aa).

In terms of domain architecture, ATP-grasp spans 108–316 (RTFMERNEIP…LLEVAEGIVD (209 aa)). Position 135-194 (135-194 (VDDFGRPVVVKPIGLTGGKGVKVVGYQLRDNEEAKSYAEELIRRDGRVLIEERTNGVEFT)) interacts with ATP. The Mg(2+) site is built by Q274, E286, and N288. The Mn(2+) site is built by Q274, E286, and N288.

Belongs to the GARS family. Requires Mg(2+) as cofactor. Mn(2+) serves as cofactor.

It carries out the reaction 5-phospho-beta-D-ribosylamine + glycine + ATP = N(1)-(5-phospho-beta-D-ribosyl)glycinamide + ADP + phosphate + H(+). Its pathway is purine metabolism; IMP biosynthesis via de novo pathway; N(1)-(5-phospho-D-ribosyl)glycinamide from 5-phospho-alpha-D-ribose 1-diphosphate: step 2/2. The sequence is that of Phosphoribosylamine--glycine ligase from Thermococcus gammatolerans (strain DSM 15229 / JCM 11827 / EJ3).